The following is a 291-amino-acid chain: ATP synthase gamma chain (291 aa).

Belongs to the ATPase gamma chain family. As to quaternary structure, F-type ATPases have 2 components, CF(1) - the catalytic core - and CF(0) - the membrane proton channel. CF(1) has five subunits: alpha(3), beta(3), gamma(1), delta(1), epsilon(1). CF(0) has three main subunits: a, b and c.

The protein localises to the cell membrane. Its function is as follows. Produces ATP from ADP in the presence of a proton gradient across the membrane. The gamma chain is believed to be important in regulating ATPase activity and the flow of protons through the CF(0) complex. This Streptococcus pyogenes serotype M1 protein is ATP synthase gamma chain.